A 189-amino-acid polypeptide reads, in one-letter code: Peptidyl-tRNA hydrolase (189 aa).

Residue Tyr-14 participates in tRNA binding. Residue His-19 is the Proton acceptor of the active site. The tRNA site is built by Phe-61, Asn-63, and Asn-109.

The protein belongs to the PTH family. As to quaternary structure, monomer.

Its subcellular location is the cytoplasm. It catalyses the reaction an N-acyl-L-alpha-aminoacyl-tRNA + H2O = an N-acyl-L-amino acid + a tRNA + H(+). Functionally, hydrolyzes ribosome-free peptidyl-tRNAs (with 1 or more amino acids incorporated), which drop off the ribosome during protein synthesis, or as a result of ribosome stalling. In terms of biological role, catalyzes the release of premature peptidyl moieties from peptidyl-tRNA molecules trapped in stalled 50S ribosomal subunits, and thus maintains levels of free tRNAs and 50S ribosomes. This Sulfurovum sp. (strain NBC37-1) protein is Peptidyl-tRNA hydrolase.